Consider the following 498-residue polypeptide: Ribulose bisphosphate carboxylase large chain (498 aa).

Residues 1-2 (MS) constitute a propeptide that is removed on maturation. Pro3 is modified (N-acetylproline). Lys14 carries the post-translational modification N6,N6,N6-trimethyllysine. Substrate is bound by residues Asn123 and Thr173. The active-site Proton acceptor is the Lys175. Substrate is bound at residue Lys177. Residues Lys201, Asp203, and Glu204 each coordinate Mg(2+). N6-carboxylysine is present on Lys201. His294 functions as the Proton acceptor in the catalytic mechanism. Substrate contacts are provided by Arg295, His327, and Ser379. A disordered region spans residues 473 to 498 (DTLDPNDKKQRDNEDTLADKFFGDKG).

The protein belongs to the RuBisCO large chain family. Type I subfamily. As to quaternary structure, heterohexadecamer of 8 large chains and 8 small chains; disulfide-linked. The disulfide link is formed within the large subunit homodimers. Requires Mg(2+) as cofactor. In terms of processing, the disulfide bond which can form in the large chain dimeric partners within the hexadecamer appears to be associated with oxidative stress and protein turnover.

Its subcellular location is the plastid. The catalysed reaction is 2 (2R)-3-phosphoglycerate + 2 H(+) = D-ribulose 1,5-bisphosphate + CO2 + H2O. The enzyme catalyses D-ribulose 1,5-bisphosphate + O2 = 2-phosphoglycolate + (2R)-3-phosphoglycerate + 2 H(+). Functionally, ruBisCO catalyzes two reactions: the carboxylation of D-ribulose 1,5-bisphosphate, the primary event in carbon dioxide fixation, as well as the oxidative fragmentation of the pentose substrate in the photorespiration process. Both reactions occur simultaneously and in competition at the same active site. This is Ribulose bisphosphate carboxylase large chain from Cuscuta exaltata (Tall dodder).